The chain runs to 339 residues: Enhancer of mRNA-decapping protein 1 (339 aa).

2 disordered regions span residues 1 to 240 (MMMH…PPRY) and 309 to 339 (FPVN…SAKK). Positions 13–25 (SPGSENHSNPASR) are enriched in polar residues. 2 stretches are compositionally biased toward basic and acidic residues: residues 26–38 (EQSK…ERRL) and 91–100 (DNKEKNKKLL). A compositionally biased stretch (low complexity) spans 111-131 (NFSFYSESNSNSNSNVSSNSN). The segment covering 163 to 173 (RPDKNGKKGPV) has biased composition (basic and acidic residues). Polar residues predominate over residues 196 to 212 (FQRTSPKQQANTINDEN). The span at 213–237 (SSPSSSASSVSMSSPRPVAGAVAAP) shows a compositional bias: low complexity.

The protein belongs to the EDC family.

It localises to the cytoplasm. Its function is as follows. mRNA-binding protein which stimulates mRNA decapping. This Scheffersomyces stipitis (strain ATCC 58785 / CBS 6054 / NBRC 10063 / NRRL Y-11545) (Yeast) protein is Enhancer of mRNA-decapping protein 1 (EDC1).